Reading from the N-terminus, the 649-residue chain is Quinol oxidase subunit 1 (649 aa).

The Extracellular portion of the chain corresponds to 1–15 (MKFKWDEFFVTGDPL). A helical transmembrane segment spans residues 16–34 (ILGAQVSIALSTIAIIFVL). Residues 35–56 (TYFKKWKWLWSEWITTVDHKKL) lie on the Cytoplasmic side of the membrane. Residues 57 to 75 (GIMYIISAVIMLFRGGVDG) traverse the membrane as a helical segment. Topologically, residues 76-97 (LMMRAQLALPNNSFLDSNHYNE) are extracellular. The chain crosses the membrane as a helical span at residues 98–117 (IFTTHGTIMIIFMAMPFLIG). H102 is a binding site for Fe(II)-heme a. The Cytoplasmic segment spans residues 118–139 (LINVVVPLQIGARDVAFPYLNN). The chain crosses the membrane as a helical span at residues 140 to 157 (LSFWTFFVGAMLFNISFV). Over 158–190 (IGGSPNAGWTSYMPLASNDMSPGPGENYYLLGL) the chain is Extracellular. The chain crosses the membrane as a helical span at residues 191–209 (QIAGIGTLMTGINFMVTIL). Residues 210-227 (KMRTKGMTLMRMPMFTWT) are Cytoplasmic-facing. Residues 228–246 (TLITMVIIVFAFPVLTVAL) form a helical membrane-spanning segment. At 247-272 (ALLSFDRLFGAHFFTLEAGGMPMLWA) the chain is on the extracellular side. Residues 273–292 (NLFWIWGHPEVYIVILPAFG) traverse the membrane as a helical segment. Cu cation-binding residues include H280 and Y284. The segment at residues 280–284 (HPEVY) is a cross-link (1'-histidyl-3'-tyrosine (His-Tyr)). Residues 293-315 (IFSEIISSFARKQLFGYKAMVGS) are Cytoplasmic-facing. Residues 316–335 (IIAISVLSFLVWTHHFFTMG) traverse the membrane as a helical segment. Residues H329 and H330 each coordinate Cu cation. At 336–343 (NSASVNSF) the chain is on the extracellular side. Residues 344–362 (FSITTMAISIPTGVKIFNW) traverse the membrane as a helical segment. The Cytoplasmic segment spans residues 363–377 (LFTMYKGRISFTTPM). Residues 378–397 (LWALAFIPNFVIGGVTGVML) traverse the membrane as a helical segment. Topologically, residues 398–405 (AMAAADYQ) are extracellular. Residues 406 to 425 (YHNTYFLVSHFHYVLIAGTV) form a helical membrane-spanning segment. H415 provides a ligand contact to heme a3. H417 is a binding site for Fe(II)-heme a. At 426 to 452 (FACFAGFIFWYPKMFGHKLNERIGKWF) the chain is on the cytoplasmic side. A helical membrane pass occupies residues 453–472 (FWIFMIGFNICFFPQYFLGL). Residues 473–490 (QGMPRRIYTYGPNDGWTT) are Extracellular-facing. Residues 491 to 510 (LNFISTVGAFMMGVGFLILC) traverse the membrane as a helical segment. Over 511–584 (YNIYYSFRYS…SKFKKIHMPS (74 aa)) the chain is Cytoplasmic. The chain crosses the membrane as a helical span at residues 585 to 604 (NSGRPFFMSVAFGLAGFGLV). The Extracellular segment spans residues 605–610 (FEWYWM). The helical transmembrane segment at 611–631 (GVVGLIGVLLCMVLRSFEYDN) threads the bilayer. Over 632–649 (GYYISVDEIKETERKISE) the chain is Cytoplasmic.

The protein belongs to the heme-copper respiratory oxidase family. Cu cation is required as a cofactor. Requires ferriheme a as cofactor. The cofactor is Heme A3..

It localises to the cell membrane. The catalysed reaction is 2 a quinol + O2 = 2 a quinone + 2 H2O. The protein operates within energy metabolism; oxidative phosphorylation. Catalyzes quinol oxidation with the concomitant reduction of oxygen to water. Major component for energy conversion during vegetative growth. The chain is Quinol oxidase subunit 1 (qoxB) from Bacillus subtilis (strain 168).